The sequence spans 253 residues: Small ribosomal subunit protein uS2 (253 aa).

This sequence belongs to the universal ribosomal protein uS2 family.

This is Small ribosomal subunit protein uS2 from Hahella chejuensis (strain KCTC 2396).